A 216-amino-acid polypeptide reads, in one-letter code: Protein-L-isoaspartate O-methyltransferase (216 aa).

Residue S63 is part of the active site.

It belongs to the methyltransferase superfamily. L-isoaspartyl/D-aspartyl protein methyltransferase family.

The protein resides in the cytoplasm. It carries out the reaction [protein]-L-isoaspartate + S-adenosyl-L-methionine = [protein]-L-isoaspartate alpha-methyl ester + S-adenosyl-L-homocysteine. Functionally, catalyzes the methyl esterification of L-isoaspartyl residues in peptides and proteins that result from spontaneous decomposition of normal L-aspartyl and L-asparaginyl residues. It plays a role in the repair and/or degradation of damaged proteins. This Rhodopseudomonas palustris (strain BisB18) protein is Protein-L-isoaspartate O-methyltransferase.